The following is a 169-amino-acid chain: Peptide deformylase 1 (169 aa).

Residues C93 and H135 each contribute to the Fe cation site. The active site involves E136. H139 serves as a coordination point for Fe cation.

Belongs to the polypeptide deformylase family. Fe(2+) serves as cofactor.

It carries out the reaction N-terminal N-formyl-L-methionyl-[peptide] + H2O = N-terminal L-methionyl-[peptide] + formate. Removes the formyl group from the N-terminal Met of newly synthesized proteins. Requires at least a dipeptide for an efficient rate of reaction. N-terminal L-methionine is a prerequisite for activity but the enzyme has broad specificity at other positions. In Corynebacterium efficiens (strain DSM 44549 / YS-314 / AJ 12310 / JCM 11189 / NBRC 100395), this protein is Peptide deformylase 1.